A 157-amino-acid polypeptide reads, in one-letter code: Ribosome-binding factor A (157 aa).

Positions Gln-127–Asp-157 are disordered. Residues Ala-135–Asp-157 are compositionally biased toward acidic residues.

It belongs to the RbfA family. As to quaternary structure, monomer. Binds 30S ribosomal subunits, but not 50S ribosomal subunits or 70S ribosomes.

It is found in the cytoplasm. In terms of biological role, one of several proteins that assist in the late maturation steps of the functional core of the 30S ribosomal subunit. Associates with free 30S ribosomal subunits (but not with 30S subunits that are part of 70S ribosomes or polysomes). Required for efficient processing of 16S rRNA. May interact with the 5'-terminal helix region of 16S rRNA. The chain is Ribosome-binding factor A from Shewanella baltica (strain OS195).